The sequence spans 277 residues: Shikimate dehydrogenase (NADP(+)) (277 aa).

Residues 15-17 (SLS) and T62 each bind shikimate. The active-site Proton acceptor is the K66. Shikimate-binding residues include N87 and D102. NADP(+) is bound by residues 127–131 (GAGGA), 151–156 (NRTVDK), and I219. Shikimate is bound at residue Y221. An NADP(+)-binding site is contributed by G242.

Belongs to the shikimate dehydrogenase family. Homodimer.

It carries out the reaction shikimate + NADP(+) = 3-dehydroshikimate + NADPH + H(+). It participates in metabolic intermediate biosynthesis; chorismate biosynthesis; chorismate from D-erythrose 4-phosphate and phosphoenolpyruvate: step 4/7. In terms of biological role, involved in the biosynthesis of the chorismate, which leads to the biosynthesis of aromatic amino acids. Catalyzes the reversible NADPH linked reduction of 3-dehydroshikimate (DHSA) to yield shikimate (SA). The sequence is that of Shikimate dehydrogenase (NADP(+)) from Bacillus cereus (strain AH187).